Here is a 486-residue protein sequence, read N- to C-terminus: Katanin p60 ATPase-containing subunit A1 (486 aa).

The segment at 103–174 is disordered; it reads RSSPLPVRRP…NKAEVSEKEV (72 aa). Over residues 143-174 the composition is skewed to basic and acidic residues; that stretch reads NGDRAKPLKGKEKKEAKPKDDKNKAEVSEKEV. Position 244-251 (244-251) interacts with ATP; that stretch reads GPPGTGKT.

The protein belongs to the AAA ATPase family. Katanin p60 subunit A1 subfamily. In terms of assembly, can homooligomerize into hexameric rings, which may be promoted by interaction with microtubules. Interacts with katnb1, which may serve as a targeting subunit.

It localises to the cytoplasm. It is found in the cytoskeleton. The protein resides in the microtubule organizing center. Its subcellular location is the centrosome. The protein localises to the spindle pole. It localises to the spindle. It catalyses the reaction n ATP + n H2O + a microtubule = n ADP + n phosphate + (n+1) alpha/beta tubulin heterodimers.. Its activity is regulated as follows. ATPase activity is stimulated by microtubules, which promote homooligomerization. ATP-dependent microtubule severing is stimulated by interaction with katnb1. In terms of biological role, catalytic subunit of a complex which severs microtubules in an ATP-dependent manner. Microtubule severing may promote rapid reorganization of cellular microtubule arrays and the release of microtubules from the centrosome following nucleation. The sequence is that of Katanin p60 ATPase-containing subunit A1 (katna1) from Salmo salar (Atlantic salmon).